Consider the following 318-residue polypeptide: Type II methyltransferase M.HaeII (318 aa).

The SAM-dependent MTase C5-type domain occupies 4–304; that stretch reads YKTIDLFAGI…GSMINSLNMA (301 aa). Cys73 is a catalytic residue.

The protein belongs to the class I-like SAM-binding methyltransferase superfamily. C5-methyltransferase family.

The enzyme catalyses a 2'-deoxycytidine in DNA + S-adenosyl-L-methionine = a 5-methyl-2'-deoxycytidine in DNA + S-adenosyl-L-homocysteine + H(+). Functionally, a methylase, recognizes the double-stranded sequence 5'-RGCGCY-3', methylates C-? on both strands, and protects the DNA from cleavage by the HaeII endonuclease. This is Type II methyltransferase M.HaeII (haeIIM) from Haemophilus aegyptius.